The chain runs to 1207 residues: DNA-directed RNA polymerase subunit beta' (1207 aa).

Zn(2+) is bound by residues Cys60, Cys62, Cys75, and Cys78. Residues Asp450, Asp452, and Asp454 each contribute to the Mg(2+) site. Zn(2+) contacts are provided by Cys818, Cys892, Cys899, and Cys902.

The protein belongs to the RNA polymerase beta' chain family. As to quaternary structure, the RNAP catalytic core consists of 2 alpha, 1 beta, 1 beta' and 1 omega subunit. When a sigma factor is associated with the core the holoenzyme is formed, which can initiate transcription. It depends on Mg(2+) as a cofactor. The cofactor is Zn(2+).

It carries out the reaction RNA(n) + a ribonucleoside 5'-triphosphate = RNA(n+1) + diphosphate. DNA-dependent RNA polymerase catalyzes the transcription of DNA into RNA using the four ribonucleoside triphosphates as substrates. The protein is DNA-directed RNA polymerase subunit beta' of Lactococcus lactis subsp. cremoris (strain MG1363).